Here is a 405-residue protein sequence, read N- to C-terminus: MAFLFRIRTSEFILQKATQFRLKSSSSSIFTLKSLTSKQKKSRDTLSLLKSENNPDRILEICRSTSLSPDYHVDRIIFSVAVVTLAREKHFVAVSQLLDGFIQNQPDPKSESFAVRAIILYGRANMLDRSIQTFRNLEQYEIPRTVKSLNALLFACLMAKDYKEANRVYLEMPKMYGIEPDLETYNRMIRVLCESGSTSSSYSIVAEMERKWIKPTAASFGLMIDGFYKEEKFDEVRKVMRMMDEFGVHVGVATYNIMIQCLCKRKKSAEAKALIDGVMSCRMRPNSVTYSLLIHGFCSEENLDEAMNLFEVMVCNGYKPDSECYFTLIHCLCKGGDFETALILCRESMEKNWVPSFSVMKWLVNGLASRSKVDEAKELIAVVKEKFTRNVDLWNEVEAALPLPQ.

A mitochondrion-targeting transit peptide spans 1-72; the sequence is MAFLFRIRTS…RSTSLSPDYH (72 aa). PPR repeat units lie at residues 74–108, 110–144, 145–180, 181–215, 216–250, 251–285, 286–320, 321–355, and 356–386; these read DRII…QPDP, SESF…EIPR, TVKS…GIEP, DLET…WIKP, TAAS…GVHV, GVAT…RMRP, NSVT…GYKP, DSEC…NWVP, and SFSV…VKEK.

This sequence belongs to the PPR family. P subfamily.

The protein resides in the mitochondrion. This chain is Pentatricopeptide repeat-containing protein At1g11630, mitochondrial, found in Arabidopsis thaliana (Mouse-ear cress).